The following is a 151-amino-acid chain: Methylglyoxal synthase (151 aa).

One can recognise an MGS-like domain in the interval 6–151; it reads RVMPAHKHIA…DYDAYLAERV (146 aa). Substrate-binding positions include His-19, Lys-23, 45–48, and 65–66; these read TGTT and SG. The active-site Proton donor/acceptor is Asp-71. Substrate is bound at residue His-98.

It belongs to the methylglyoxal synthase family.

The enzyme catalyses dihydroxyacetone phosphate = methylglyoxal + phosphate. Its function is as follows. Catalyzes the formation of methylglyoxal from dihydroxyacetone phosphate. The polypeptide is Methylglyoxal synthase (Aliivibrio fischeri (strain MJ11) (Vibrio fischeri)).